We begin with the raw amino-acid sequence, 118 residues long: UPF0231 protein PM0457 (118 aa).

The protein belongs to the UPF0231 family.

The polypeptide is UPF0231 protein PM0457 (Pasteurella multocida (strain Pm70)).